Consider the following 603-residue polypeptide: Myotubularin (603 aa).

The segment covering 1–13 has biased composition (polar residues); the sequence is MASASTSKYNSHS. The disordered stretch occupies residues 1–25; the sequence is MASASTSKYNSHSLENESIKRTSRD. A phosphoserine mark is found at serine 13 and serine 18. Residues 14–25 show a composition bias toward basic and acidic residues; sequence LENESIKRTSRD. The region spanning 29–97 is the GRAM domain; it reads RDLTEAVPRL…GVISRIEKMG (69 aa). One can recognise a Myotubularin phosphatase domain in the interval 163–538; sequence GWTVYNPVEE…RHLELWVNYY (376 aa). The a 1,2-diacyl-sn-glycero-3-phospho-(1D-myo-inositol-3,5-bisphosphate) site is built by asparagine 288, asparagine 313, and isoleucine 314. Residues asparagine 288, asparagine 313, and isoleucine 314 each coordinate a 1,2-diacyl-sn-glycero-3-phospho-(1D-myo-inositol-3-phosphate). Cysteine 375 (phosphocysteine intermediate) is an active-site residue. The a 1,2-diacyl-sn-glycero-3-phospho-(1D-myo-inositol-3,5-bisphosphate) site is built by serine 376, aspartate 377, glycine 378, tryptophan 379, aspartate 380, arginine 381, lysine 417, and arginine 421. Residues serine 376, aspartate 377, glycine 378, tryptophan 379, aspartate 380, and arginine 381 each coordinate a 1,2-diacyl-sn-glycero-3-phospho-(1D-myo-inositol-3-phosphate). Arginine 421 lines the a 1,2-diacyl-sn-glycero-3-phospho-(1D-myo-inositol-3-phosphate) pocket. Threonine 495 carries the post-translational modification Phosphothreonine. The interval 579–603 is disordered; that stretch reads SAKLSDPPTSPSSPSQMMPHVQTHF. Serine 588 bears the Phosphoserine mark.

Belongs to the protein-tyrosine phosphatase family. Non-receptor class myotubularin subfamily. In terms of assembly, heterodimer with MTMR12. Interacts with KMT2A/MLL1 (via SET domain). Interacts with DES in skeletal muscle but not in cardiac muscle. Interacts with SPEG.

The protein localises to the cytoplasm. It is found in the cell membrane. The protein resides in the cell projection. It localises to the filopodium. Its subcellular location is the ruffle. The protein localises to the late endosome. It is found in the myofibril. The protein resides in the sarcomere. The enzyme catalyses a 1,2-diacyl-sn-glycero-3-phospho-(1D-myo-inositol-3-phosphate) + H2O = a 1,2-diacyl-sn-glycero-3-phospho-(1D-myo-inositol) + phosphate. The catalysed reaction is a 1,2-diacyl-sn-glycero-3-phospho-(1D-myo-inositol-3,5-bisphosphate) + H2O = a 1,2-diacyl-sn-glycero-3-phospho-(1D-myo-inositol-5-phosphate) + phosphate. It catalyses the reaction 1,2-dioctanoyl-sn-glycero-3-phospho-(1-D-myo-inositol-3-phosphate) + H2O = 1,2-dioctanoyl-sn-glycero-3-phospho-(1D-myo-inositol) + phosphate. It carries out the reaction 1,2-dioctanoyl-sn-glycero-3-phospho-(1D-myo-inositol-3,5-bisphosphate) + H2O = 1,2-dioctanoyl-sn-glycero-3-phospho-(1D-myo-inositol-5-phosphate) + phosphate. The enzyme catalyses 1,2-dihexadecanoyl-sn-glycero-3-phospho-(1D-myo-inositol-3,5-phosphate) + H2O = 1,2-dihexadecanoyl-sn-glycero-3-phospho-(1D-myo-inositol-5-phosphate) + phosphate. Allosterically activated by phosphatidylinositol 5-phosphate (PI5P). Functionally, lipid phosphatase which dephosphorylates phosphatidylinositol 3-monophosphate (PI3P) and phosphatidylinositol 3,5-bisphosphate (PI(3,5)P2). Has also been shown to dephosphorylate phosphotyrosine- and phosphoserine-containing peptides. Negatively regulates EGFR degradation through regulation of EGFR trafficking from the late endosome to the lysosome. Plays a role in vacuolar formation and morphology. Regulates desmin intermediate filament assembly and architecture. Plays a role in mitochondrial morphology and positioning. Required for skeletal muscle maintenance but not for myogenesis. In skeletal muscles, stabilizes MTMR12 protein levels. The polypeptide is Myotubularin (Homo sapiens (Human)).